The following is a 215-amino-acid chain: Ion-translocating oxidoreductase complex subunit G (215 aa).

Residues 9–29 form a helical membrane-spanning segment; the sequence is GLLLSGFALICTAAVALVNEA. T176 is modified (FMN phosphoryl threonine).

This sequence belongs to the RnfG family. The complex is composed of six subunits: RnfA, RnfB, RnfC, RnfD, RnfE and RnfG. The cofactor is FMN.

Its subcellular location is the cell inner membrane. Part of a membrane-bound complex that couples electron transfer with translocation of ions across the membrane. In Shewanella amazonensis (strain ATCC BAA-1098 / SB2B), this protein is Ion-translocating oxidoreductase complex subunit G.